A 389-amino-acid chain; its full sequence is Gibberellin 20 oxidase 2 (389 aa).

Pro residues predominate over residues 1–17 (MVAEHPTPPQPHQPPPM). The disordered stretch occupies residues 1 to 23 (MVAEHPTPPQPHQPPPMDSTAGS). Residues 224 to 324 (DSSSIMRCNY…RRSLAFFLCP (101 aa)) enclose the Fe2OG dioxygenase domain. Positions 249, 251, and 305 each coordinate Fe cation. The active site involves Arg-315.

It belongs to the iron/ascorbate-dependent oxidoreductase family. GA20OX subfamily. Fe cation serves as cofactor. L-ascorbate is required as a cofactor.

The enzyme catalyses gibberellin A12 + 2 2-oxoglutarate + 3 O2 + H(+) = gibberellin A9 + 2 succinate + 3 CO2 + 2 H2O. It carries out the reaction gibberellin A53 + 2 2-oxoglutarate + 3 O2 + H(+) = gibberellin A20 + 2 succinate + 3 CO2 + 2 H2O. In terms of biological role, key oxidase enzyme in the biosynthesis of gibberellin that catalyzes the conversion of GA53 to GA20 via a three-step oxidation at C-20 of the GA skeleton. In Oryza sativa subsp. indica (Rice), this protein is Gibberellin 20 oxidase 2 (20ox2).